The sequence spans 377 residues: Chaperone protein DnaJ (377 aa).

The region spanning D5–G70 is the J domain. Residues G133–S211 form a CR-type zinc finger. Zn(2+)-binding residues include C146, C149, C163, C166, C185, C188, C199, and C202. 4 CXXCXGXG motif repeats span residues C146 to G153, C163 to G170, C185 to G192, and C199 to G206.

This sequence belongs to the DnaJ family. Homodimer. Requires Zn(2+) as cofactor.

It is found in the cytoplasm. Its function is as follows. Participates actively in the response to hyperosmotic and heat shock by preventing the aggregation of stress-denatured proteins and by disaggregating proteins, also in an autonomous, DnaK-independent fashion. Unfolded proteins bind initially to DnaJ; upon interaction with the DnaJ-bound protein, DnaK hydrolyzes its bound ATP, resulting in the formation of a stable complex. GrpE releases ADP from DnaK; ATP binding to DnaK triggers the release of the substrate protein, thus completing the reaction cycle. Several rounds of ATP-dependent interactions between DnaJ, DnaK and GrpE are required for fully efficient folding. Also involved, together with DnaK and GrpE, in the DNA replication of plasmids through activation of initiation proteins. This chain is Chaperone protein DnaJ, found in Shewanella baltica (strain OS195).